The chain runs to 677 residues: DNA ligase (677 aa).

Residues 35–39 (DAEFD), 85–86 (SL), and Glu-110 each bind NAD(+). Residue Lys-112 is the N6-AMP-lysine intermediate of the active site. NAD(+) is bound by residues Arg-133 and Glu-173. A disordered region spans residues 189–210 (QKEGGKPFANPRNAAAGSLRQK). Positions 289 and 313 each coordinate NAD(+). Zn(2+) contacts are provided by Cys-407, Cys-410, Cys-426, and Cys-432. Residues 596–677 (IPDQVLEGLT…FKQLLANGTV (82 aa)) form the BRCT domain.

Belongs to the NAD-dependent DNA ligase family. LigA subfamily. Mg(2+) is required as a cofactor. Requires Mn(2+) as cofactor.

It catalyses the reaction NAD(+) + (deoxyribonucleotide)n-3'-hydroxyl + 5'-phospho-(deoxyribonucleotide)m = (deoxyribonucleotide)n+m + AMP + beta-nicotinamide D-nucleotide.. Functionally, DNA ligase that catalyzes the formation of phosphodiester linkages between 5'-phosphoryl and 3'-hydroxyl groups in double-stranded DNA using NAD as a coenzyme and as the energy source for the reaction. It is essential for DNA replication and repair of damaged DNA. The polypeptide is DNA ligase (Corynebacterium diphtheriae (strain ATCC 700971 / NCTC 13129 / Biotype gravis)).